The following is a 544-amino-acid chain: GMP synthase [glutamine-hydrolyzing] (544 aa).

Positions 12-210 constitute a Glutamine amidotransferase type-1 domain; it reads TILILDFGSQ…VKNVCSVRDG (199 aa). Residue C88 is the Nucleophile of the active site. Catalysis depends on residues H184 and E186. The region spanning 211-419 is the GMPS ATP-PPase domain; that stretch reads WSMESFIPKE…LNIPEHLVGR (209 aa). Residue 239-245 participates in ATP binding; it reads SGGVDST. XMP-binding residues include R312, D481, K536, and E542.

As to quaternary structure, homodimer. Also forms a small population of homotetramers. It depends on Mg(2+) as a cofactor.

It localises to the cytoplasm. Its subcellular location is the cytosol. It catalyses the reaction XMP + L-glutamine + ATP + H2O = GMP + L-glutamate + AMP + diphosphate + 2 H(+). It participates in purine metabolism; GMP biosynthesis; GMP from XMP (L-Gln route): step 1/1. Catalyzes the conversion of xanthine monophosphate (XMP) to GMP in the presence of glutamine and ATP through an adenyl-XMP intermediate. This Cryptococcus neoformans var. neoformans serotype D (strain JEC21 / ATCC MYA-565) (Filobasidiella neoformans) protein is GMP synthase [glutamine-hydrolyzing].